The following is a 334-amino-acid chain: Malate dehydrogenase, cytoplasmic (334 aa).

Residue 11–17 participates in NAD(+) binding; that stretch reads GAAGQIA. Residues Arg-92 and Arg-98 each contribute to the substrate site. NAD(+) contacts are provided by residues Asn-105, Gln-112, and 129 to 131; that span reads VGN. Substrate is bound by residues Asn-131 and Arg-162. The Proton acceptor role is filled by His-187.

Belongs to the LDH/MDH superfamily. MDH type 2 family. In terms of assembly, homodimer.

It localises to the cytoplasm. Its subcellular location is the cytosol. The catalysed reaction is (S)-malate + NAD(+) = oxaloacetate + NADH + H(+). It carries out the reaction (S)-2-hydroxyglutarate + NAD(+) = 2-oxoglutarate + NADH + H(+). Catalyzes the reduction of aromatic alpha-keto acids in the presence of NADH. Plays essential roles in the malate-aspartate shuttle and the tricarboxylic acid cycle, important in mitochondrial NADH supply for oxidative phosphorylation. Catalyzes the reduction of 2-oxoglutarate to 2-hydroxyglutarate, leading to elevated reactive oxygen species (ROS). This is Malate dehydrogenase, cytoplasmic (mdh1) from Xenopus laevis (African clawed frog).